A 156-amino-acid chain; its full sequence is Ecotin (156 aa).

The signal sequence occupies residues 1–19 (MKALLIAAGVAALSSTAMA). The cysteines at positions 65 and 102 are disulfide-linked.

The protein belongs to the protease inhibitor I11 (ecotin) family. Homodimer.

Its subcellular location is the periplasm. Its function is as follows. General inhibitor of family S1 serine proteases. The polypeptide is Ecotin (Pseudomonas aeruginosa (strain UCBPP-PA14)).